The sequence spans 202 residues: Inner membrane-spanning protein YciB (202 aa).

Helical transmembrane passes span 3–23 (ILFD…AGGN), 46–66 (ILLA…WVWM), 73–93 (TMLW…LFFH), 100–120 (WKPT…AVIF), 145–165 (LAWA…AYNF), and 173–193 (FKLF…GFYL).

It belongs to the YciB family.

The protein localises to the cell inner membrane. Functionally, plays a role in cell envelope biogenesis, maintenance of cell envelope integrity and membrane homeostasis. The chain is Inner membrane-spanning protein YciB from Aromatoleum aromaticum (strain DSM 19018 / LMG 30748 / EbN1) (Azoarcus sp. (strain EbN1)).